The sequence spans 95 residues: Aspartyl/glutamyl-tRNA(Asn/Gln) amidotransferase subunit C (95 aa).

Belongs to the GatC family. As to quaternary structure, heterotrimer of A, B and C subunits.

The catalysed reaction is L-glutamyl-tRNA(Gln) + L-glutamine + ATP + H2O = L-glutaminyl-tRNA(Gln) + L-glutamate + ADP + phosphate + H(+). The enzyme catalyses L-aspartyl-tRNA(Asn) + L-glutamine + ATP + H2O = L-asparaginyl-tRNA(Asn) + L-glutamate + ADP + phosphate + 2 H(+). Functionally, allows the formation of correctly charged Asn-tRNA(Asn) or Gln-tRNA(Gln) through the transamidation of misacylated Asp-tRNA(Asn) or Glu-tRNA(Gln) in organisms which lack either or both of asparaginyl-tRNA or glutaminyl-tRNA synthetases. The reaction takes place in the presence of glutamine and ATP through an activated phospho-Asp-tRNA(Asn) or phospho-Glu-tRNA(Gln). In Methylobacillus flagellatus (strain ATCC 51484 / DSM 6875 / VKM B-1610 / KT), this protein is Aspartyl/glutamyl-tRNA(Asn/Gln) amidotransferase subunit C.